A 330-amino-acid chain; its full sequence is Aspartate--ammonia ligase (330 aa).

The protein belongs to the class-II aminoacyl-tRNA synthetase family. AsnA subfamily.

Its subcellular location is the cytoplasm. It carries out the reaction L-aspartate + NH4(+) + ATP = L-asparagine + AMP + diphosphate + H(+). Its pathway is amino-acid biosynthesis; L-asparagine biosynthesis; L-asparagine from L-aspartate (ammonia route): step 1/1. This Pectobacterium carotovorum subsp. carotovorum (strain PC1) protein is Aspartate--ammonia ligase.